A 272-amino-acid polypeptide reads, in one-letter code: Shikimate dehydrogenase (NADP(+)) (272 aa).

Shikimate contacts are provided by residues 14-16 (SKS) and Thr-61. Lys-65 acts as the Proton acceptor in catalysis. NADP(+) is bound at residue Glu-77. Positions 86 and 102 each coordinate shikimate. NADP(+) contacts are provided by residues 126–130 (GAGGA), 149–154 (NRTVSR), and Met-213. Shikimate is bound at residue Tyr-215. Gly-237 is an NADP(+) binding site.

Belongs to the shikimate dehydrogenase family. As to quaternary structure, homodimer.

The catalysed reaction is shikimate + NADP(+) = 3-dehydroshikimate + NADPH + H(+). The protein operates within metabolic intermediate biosynthesis; chorismate biosynthesis; chorismate from D-erythrose 4-phosphate and phosphoenolpyruvate: step 4/7. Involved in the biosynthesis of the chorismate, which leads to the biosynthesis of aromatic amino acids. Catalyzes the reversible NADPH linked reduction of 3-dehydroshikimate (DHSA) to yield shikimate (SA). The sequence is that of Shikimate dehydrogenase (NADP(+)) from Shigella flexneri serotype 5b (strain 8401).